A 142-amino-acid chain; its full sequence is MAP3K7 C-terminal-like protein (142 aa).

Ubiquitous.

The protein is MAP3K7 C-terminal-like protein (Map3k7cl) of Mus musculus (Mouse).